We begin with the raw amino-acid sequence, 73 residues long: Translation initiation factor IF-1 (73 aa).

An S1-like domain is found at 1–72 (MSKKDVIELE…SRGRIVYRKK (72 aa)).

This sequence belongs to the IF-1 family. As to quaternary structure, component of the 30S ribosomal translation pre-initiation complex which assembles on the 30S ribosome in the order IF-2 and IF-3, IF-1 and N-formylmethionyl-tRNA(fMet); mRNA recruitment can occur at any time during PIC assembly.

The protein resides in the cytoplasm. In terms of biological role, one of the essential components for the initiation of protein synthesis. Stabilizes the binding of IF-2 and IF-3 on the 30S subunit to which N-formylmethionyl-tRNA(fMet) subsequently binds. Helps modulate mRNA selection, yielding the 30S pre-initiation complex (PIC). Upon addition of the 50S ribosomal subunit IF-1, IF-2 and IF-3 are released leaving the mature 70S translation initiation complex. In Fusobacterium nucleatum subsp. nucleatum (strain ATCC 25586 / DSM 15643 / BCRC 10681 / CIP 101130 / JCM 8532 / KCTC 2640 / LMG 13131 / VPI 4355), this protein is Translation initiation factor IF-1.